Reading from the N-terminus, the 549-residue chain is MAKQLVFDEAARRSLERGVNAVANAVKVTLGPRGRNVVIEKKFGSPTITKDGVTVAKEVELEDKLENIGAQLLKEVASKTNDITGDGTTTATVLGQAIVKEGLRNVAAGANPLALKRGIEKAVAAAIVEIQNLAVPVEDSDAIKKVAGISANDDQVGEEIASAMDKVGKEGVITIEESKGFDTEVDVVEGMQFDKGFINPYFVTNPEKMEAVLEDAYILINEKKISNLKDLLPVLEKVAQTGRPLLIIAEDVEGEALATLVVNKLRGTLNIAAVKAPGFGDRRKEMLRDIAAVTGGEVVSEDLGHKLENTGMEMLGRAARIRITKDETTIVDGKGEQAQIDARVNAIKGELDTTDSDYAREKLQERLAKLSGGVAVIRVGAATETELKEKKHRYEDALSTARSAVEEGIVAGGGTTLLRIIPAVRKAAEGLQGDEATGARILIRALEEPARQIAVNAGEEGSVIVNAVINSDKPRYGFNAATGEYVDDMVAAGIVDPAKVTRTALQNAASIGALILTTEAIVSDKPEKPQQGGQGGGGMGGGDMGGMDF.

Residues 29 to 32 (TLGP), lysine 50, 86 to 90 (DGTTT), glycine 413, 479 to 481 (NAA), and aspartate 496 contribute to the ATP site. The segment at 522–549 (VSDKPEKPQQGGQGGGGMGGGDMGGMDF) is disordered. The segment covering 532 to 549 (GGQGGGGMGGGDMGGMDF) has biased composition (gly residues).

This sequence belongs to the chaperonin (HSP60) family. Forms a cylinder of 14 subunits composed of two heptameric rings stacked back-to-back. Interacts with the co-chaperonin GroES.

Its subcellular location is the cytoplasm. The catalysed reaction is ATP + H2O + a folded polypeptide = ADP + phosphate + an unfolded polypeptide.. Its function is as follows. Together with its co-chaperonin GroES, plays an essential role in assisting protein folding. The GroEL-GroES system forms a nano-cage that allows encapsulation of the non-native substrate proteins and provides a physical environment optimized to promote and accelerate protein folding. The protein is Chaperonin GroEL of Deinococcus deserti (strain DSM 17065 / CIP 109153 / LMG 22923 / VCD115).